Reading from the N-terminus, the 2910-residue chain is Highly reducing polyketide synthase calA (2910 aa).

In terms of domain architecture, Ketosynthase family 3 (KS3) spans 8–444 (NEPLAIVGSA…GTNAHAILES (437 aa)). Residues cysteine 181, histidine 320, and histidine 364 each act as for beta-ketoacyl synthase activity in the active site. The interval 559 to 875 (VFTGQGAQYA…PYYGVLSRGT (317 aa)) is acyl transferase (AT) domain. The interval 948–1082 (NQLLGTMMPD…LHIVFGPSSE (135 aa)) is N-terminal hotdog fold. The region spanning 948–1245 (NQLLGTMMPD…LKPLGALTAK (298 aa)) is the PKS/mFAS DH domain. Residues 949–1242 (QLLGTMMPDS…GVELKPLGAL (294 aa)) are dehydratase (DH) domain. Residue histidine 980 is the Proton acceptor; for dehydratase activity of the active site. The tract at residues 1095–1245 (MISVDNERFY…LKPLGALTAK (151 aa)) is C-terminal hotdog fold. Aspartate 1156 functions as the Proton donor; for dehydratase activity in the catalytic mechanism. Residues 1399 to 1586 (EAGLWIGKII…GIDSTAPQAF (188 aa)) are methyltransferase (MT) domain. The segment at 2125 to 2298 (TYWLCGLSGA…AATALNVGAI (174 aa)) is ketoreductase (KR)domain. Residues 2406–2488 (QSRSEVLAVV…ELAELAAEQA (83 aa)) form the Carrier domain. Serine 2448 carries the O-(pantetheine 4'-phosphoryl)serine modification. The interval 2492 to 2565 (LLPGLGGEAP…TPDPHSTKGP (74 aa)) is disordered. Positions 2522-2534 (VPQSDETGSSSAD) are enriched in polar residues. A compositionally biased stretch (low complexity) spans 2550–2559 (GYTTPTTPDP). The interval 2597–2826 (LTGVSGLLGR…DFVYVKNAAD (230 aa)) is reductase (R) domain.

Its pathway is secondary metabolite biosynthesis. In terms of biological role, highly reducing polyketide synthase; part of the gene cluster that mediates the biosynthesis of calbistrin A and related compounds. Calbistrin A is a secondary metabolite with an interesting structure that was recently found to have bioactivity against leukemia cells. It consists of two polyketides linked by an ester bond: a bicyclic decalin containing polyketide and a linear 12 carbon dioic acid structure. The polyketide synthase calA is probably responsible for forming the decalin moiety. Because calA lacks a designated enoylreductase (ER) domain, the required activity is provided by the trans-enoyl reductase calK. Following release from the PKS, calF then probably catalyzes the oxidation and the subsequent Diels Alder cycloisomerization that lead to the formation of the decalin moiety. The decalin polyketide backbone includes two C-methyl groups, at C7 and C11 in backbone, of which the C7 position is probably methylated by the methyltransferase domain of calA. A candidate for adding the methyl group at C11, if not done by CalA, is the cluster methyltransferase calH. Several additional tailoring enzymes within the cluster could be involved in the modification of the decalin polyketide product. Those include the 3 cytochrome P450 monooxygenases CalE, CalG and CalL, of which one might be responsible for the introduction of the extra hydroxyl group attached to the backbone of the decalin moiety, at position C9 in the backbone, that allows for attachment of the linear moiety. One tailoring enzyme activity that is expected to be involved in biosynthesis of calbistrin is an acyltransferase for connecting the two polyketide synthase products, and which could be performed by the cluster acyltransferase calJ. The enzyme responsible for the biosynthesis of the linear moiety, probably a second PKS, has not been identified yet. This Penicillium decumbens protein is Highly reducing polyketide synthase calA.